A 396-amino-acid polypeptide reads, in one-letter code: Phosphoglycerate kinase (396 aa).

Residues 22 to 24, Arg37, 60 to 63, Arg118, and Arg151 contribute to the substrate site; these read DFN and HFGR. ATP-binding positions include Lys201, Glu322, and 352–355; that span reads GGDS.

The protein belongs to the phosphoglycerate kinase family. As to quaternary structure, monomer.

The protein resides in the cytoplasm. The enzyme catalyses (2R)-3-phosphoglycerate + ATP = (2R)-3-phospho-glyceroyl phosphate + ADP. It functions in the pathway carbohydrate degradation; glycolysis; pyruvate from D-glyceraldehyde 3-phosphate: step 2/5. The protein is Phosphoglycerate kinase of Wolbachia pipientis subsp. Culex pipiens (strain wPip).